The sequence spans 84 residues: Defensin-like protein 49 (84 aa).

A signal peptide spans 1 to 29 (MGITKSLMIFFHIVLLAVSLSNNIILTSG). Intrachain disulfides connect Cys40/Cys82, Cys44/Cys68, Cys54/Cys80, and Cys58/Cys81.

The protein belongs to the DEFL family.

It localises to the secreted. The sequence is that of Defensin-like protein 49 from Arabidopsis thaliana (Mouse-ear cress).